Here is a 527-residue protein sequence, read N- to C-terminus: Peptide chain release factor 3 (527 aa).

The tr-type G domain occupies Asp-10–Leu-278. GTP is bound by residues Ser-19–Thr-26, Asp-87–His-91, and Asn-141–Asp-144.

It belongs to the TRAFAC class translation factor GTPase superfamily. Classic translation factor GTPase family. PrfC subfamily.

Its subcellular location is the cytoplasm. Functionally, increases the formation of ribosomal termination complexes and stimulates activities of RF-1 and RF-2. It binds guanine nucleotides and has strong preference for UGA stop codons. It may interact directly with the ribosome. The stimulation of RF-1 and RF-2 is significantly reduced by GTP and GDP, but not by GMP. This Pelobacter propionicus (strain DSM 2379 / NBRC 103807 / OttBd1) protein is Peptide chain release factor 3.